An 88-amino-acid chain; its full sequence is Large ribosomal subunit protein bL27 (88 aa).

Residues 1–23 form a disordered region; it reads MAHKKAGGSSRNGRDSAGRRLGV.

The protein belongs to the bacterial ribosomal protein bL27 family.

This chain is Large ribosomal subunit protein bL27, found in Methylorubrum populi (strain ATCC BAA-705 / NCIMB 13946 / BJ001) (Methylobacterium populi).